The chain runs to 206 residues: Large ribosomal subunit protein bL17 (206 aa).

The span at 130 to 141 (ERARGTRFEARR) shows a compositional bias: basic and acidic residues. Residues 130-206 (ERARGTRFEA…SGAGEQNSAN (77 aa)) form a disordered region. Composition is skewed to low complexity over residues 160–181 (TAAAVAVEAAEPAETPAEGAAG) and 189–200 (DDSGIGDDSGAG).

This sequence belongs to the bacterial ribosomal protein bL17 family. Part of the 50S ribosomal subunit. Contacts protein L32.

This Frankia casuarinae (strain DSM 45818 / CECT 9043 / HFP020203 / CcI3) protein is Large ribosomal subunit protein bL17.